A 502-amino-acid polypeptide reads, in one-letter code: CDP-diacylglycerol--glycerol-3-phosphate 3-phosphatidyltransferase (502 aa).

58–65 (STLYIGKE) provides a ligand contact to ATP. 2 PLD phosphodiesterase domains span residues 143-169 (GWGL…SRDY) and 410-443 (KGNT…TSRS). Catalysis depends on residues His-148, Lys-150, and Asp-155.

This sequence belongs to the CDP-alcohol phosphatidyltransferase class-II family.

It is found in the mitochondrion. The enzyme catalyses a CDP-1,2-diacyl-sn-glycerol + sn-glycerol 3-phosphate = a 1,2-diacyl-sn-glycero-3-phospho-(1'-sn-glycero-3'-phosphate) + CMP + H(+). It functions in the pathway phospholipid metabolism; phosphatidylglycerol biosynthesis; phosphatidylglycerol from CDP-diacylglycerol: step 1/2. In terms of biological role, functions in the biosynthesis of the anionic phospholipids phosphatidylglycerol and cardiolipin. The sequence is that of CDP-diacylglycerol--glycerol-3-phosphate 3-phosphatidyltransferase (pgs1) from Schizosaccharomyces pombe (strain 972 / ATCC 24843) (Fission yeast).